Reading from the N-terminus, the 79-residue chain is Translational regulator CsrA (79 aa).

This sequence belongs to the CsrA/RsmA family. As to quaternary structure, homodimer; the beta-strands of each monomer intercalate to form a hydrophobic core, while the alpha-helices form wings that extend away from the core.

The protein localises to the cytoplasm. In terms of biological role, a translational regulator that binds mRNA to regulate translation initiation and/or mRNA stability. Usually binds in the 5'-UTR at or near the Shine-Dalgarno sequence preventing ribosome-binding, thus repressing translation. Its main target seems to be the major flagellin gene, while its function is anatagonized by FliW. The protein is Translational regulator CsrA of Shouchella clausii (strain KSM-K16) (Alkalihalobacillus clausii).